A 272-amino-acid chain; its full sequence is MSETDMKLVVVGAAGRMGQTLIRTVHEAAGVRLHAAIERSNSPFIGRDAGELAGLGPIGVPITDKPLEAFVEAEGVLDFTAPAGTVEFAGLAAQARIVHVIGTTGCSADDEAKIRAAARHARVVKSGNMSLGVNLLGVLTETAARALSAKDWDIEILEMHHRHKVDAPSGTALLLGEAAAKGRGIDLADQAVKVRDGHTGPRPQGTIGFATLRGGLVVGEHSVILAGEGELVTLSHSATDRSIFARGAVAAALWGRSQKPGFYTMLDVLGLN.

Residues 12–17 and glutamate 38 contribute to the NAD(+) site; that span reads GAAGRM. Arginine 39 provides a ligand contact to NADP(+). NAD(+)-binding positions include 102-104 and 126-129; these read GTT and SGNM. Residue histidine 160 is the Proton donor/acceptor of the active site. Histidine 161 is a (S)-2,3,4,5-tetrahydrodipicolinate binding site. The Proton donor role is filled by lysine 164. 170–171 is a (S)-2,3,4,5-tetrahydrodipicolinate binding site; the sequence is GT.

Belongs to the DapB family.

It localises to the cytoplasm. It catalyses the reaction (S)-2,3,4,5-tetrahydrodipicolinate + NAD(+) + H2O = (2S,4S)-4-hydroxy-2,3,4,5-tetrahydrodipicolinate + NADH + H(+). The enzyme catalyses (S)-2,3,4,5-tetrahydrodipicolinate + NADP(+) + H2O = (2S,4S)-4-hydroxy-2,3,4,5-tetrahydrodipicolinate + NADPH + H(+). It functions in the pathway amino-acid biosynthesis; L-lysine biosynthesis via DAP pathway; (S)-tetrahydrodipicolinate from L-aspartate: step 4/4. Functionally, catalyzes the conversion of 4-hydroxy-tetrahydrodipicolinate (HTPA) to tetrahydrodipicolinate. The sequence is that of 4-hydroxy-tetrahydrodipicolinate reductase from Sinorhizobium fredii (strain NBRC 101917 / NGR234).